The primary structure comprises 509 residues: Lysine--tRNA ligase (509 aa).

2 residues coordinate Mg(2+): Glu-419 and Glu-426.

It belongs to the class-II aminoacyl-tRNA synthetase family. In terms of assembly, homodimer. Mg(2+) serves as cofactor.

Its subcellular location is the cytoplasm. It carries out the reaction tRNA(Lys) + L-lysine + ATP = L-lysyl-tRNA(Lys) + AMP + diphosphate. The polypeptide is Lysine--tRNA ligase (Methylobacillus flagellatus (strain ATCC 51484 / DSM 6875 / VKM B-1610 / KT)).